A 317-amino-acid polypeptide reads, in one-letter code: Ribosomal protein L11 methyltransferase (317 aa).

The S-adenosyl-L-methionine site is built by Thr158, Gly179, Asp201, and Asn244.

This sequence belongs to the methyltransferase superfamily. PrmA family.

The protein localises to the cytoplasm. The catalysed reaction is L-lysyl-[protein] + 3 S-adenosyl-L-methionine = N(6),N(6),N(6)-trimethyl-L-lysyl-[protein] + 3 S-adenosyl-L-homocysteine + 3 H(+). Methylates ribosomal protein L11. This is Ribosomal protein L11 methyltransferase from Streptococcus thermophilus (strain CNRZ 1066).